The sequence spans 257 residues: ECF RNA polymerase sigma factor SigE (257 aa).

A sigma-70 factor domain-2 region spans residues 87–153; it reads MPSWDELVRQ…RITTNLFLDM (67 aa). The Polymerase core binding signature appears at 111 to 114; that stretch reads NQHD. Residues 186 to 236 are sigma-70 factor domain-4; that stretch reads SRLGADLQAALDSLPPEFRAAVVLCDIEGLSYEEIGATLGVKLGTVRSRIH. The segment at residues 211 to 230 is a DNA-binding region (H-T-H motif); sequence DIEGLSYEEIGATLGVKLGT.

The protein belongs to the sigma-70 factor family. ECF subfamily. Interacts transiently with the RNA polymerase catalytic core formed by RpoA, RpoB, RpoC and RpoZ (2 alpha, 1 beta, 1 beta' and 1 omega subunit) to form the RNA polymerase holoenzyme that can initiate transcription. Interacts (via sigma-70 factor domain 4) with RseA; interaction is abrogated by treatment of cells with H(2)O(2) or detergent.

Functionally, sigma factors are initiation factors that promote the attachment of RNA polymerase to specific initiation sites and are then released. Extracytoplasmic function (ECF) sigma factors are held in an inactive form by an anti-sigma factor until released. The sequence is that of ECF RNA polymerase sigma factor SigE (sigE) from Mycolicibacterium smegmatis (strain ATCC 700084 / mc(2)155) (Mycobacterium smegmatis).